Consider the following 371-residue polypeptide: 4-hydroxyphenylpyruvate dioxygenase-like protein (371 aa).

VOC domains are found at residues R7–R135 and R160–K328. Positions 163, 258, and 339 each coordinate Fe cation.

Belongs to the 4HPPD family. Requires Fe cation as cofactor.

Its subcellular location is the mitochondrion. It carries out the reaction 3-(4-hydroxyphenyl)pyruvate + O2 = (S)-4-hydroxymandelate + CO2. In terms of biological role, iron-dependent dioxygenase that catalyzes the conversion of 4-hydroxyphenylpyruvate (4-HPPA) to 4-hydroxymandelate (4-HMA) in the mitochondria, one of the steps in the biosynthesis of coenzyme Q10 from tyrosine. The sequence is that of 4-hydroxyphenylpyruvate dioxygenase-like protein from Homo sapiens (Human).